The sequence spans 667 residues: YTH domain-containing protein ECT2 (667 aa).

Disordered stretches follow at residues 264 to 305 (QRPV…PSSV) and 379 to 398 (NELNRGPRAKGTKNQKGNLD). The span at 267–285 (VSGSGVASSYSKSSTVPSS) shows a compositional bias: low complexity. Residues 286–305 (RNQNYRSNSHYTSVHQPSSV) show a composition bias toward polar residues. Residues 442–579 (AMFFIIKSYS…EQGLKIVKIF (138 aa)) enclose the YTH domain. Residues 448–450 (KSY), D454, 464–465 (WA), N497, W521, W526, and W534 contribute to the RNA site. Residues 606–667 (KAKQTQKQVS…VTGDVVANGC (62 aa)) form a disordered region. A compositionally biased stretch (basic and acidic residues) spans 614 to 627 (VSEEKVTDEKKESA). A compositionally biased stretch (low complexity) spans 628 to 639 (TAESASKESPAA).

Interacts (via C-terminus) with CIPK1. In terms of tissue distribution, expressed in the shoot apex, at the sites of leaf formation, and in emerging leaves. Highly expressed in rapidly developing tissues.

It is found in the cytoplasm. It localises to the nucleus. Specifically recognizes and binds N6-methyladenosine (m6A)-containing RNAs, and regulates mRNA stability. M6A is a modification present at internal sites of mRNAs and some non-coding RNAs and plays a role in mRNA stability and processing. Binds preferentially in the 3'UTRs of target genes. May play dual roles in regulating 3'UTR processing in the nucleus and facilitating mRNA stability in the cytoplasm. Required for the correct timing of leaf formation and normal leaf morphology. Functions redundantly with ECT3. Required for proper trichome branching and morphology. Controls trichome morphology by binding transcripts related to trichome morphogenesis and affecting their stability. This Arabidopsis thaliana (Mouse-ear cress) protein is YTH domain-containing protein ECT2.